A 233-amino-acid polypeptide reads, in one-letter code: Ribulose-phosphate 3-epimerase (233 aa).

Residue Ser16 coordinates substrate. Residues His41, Asp43, and His74 each coordinate a divalent metal cation. Residue Asp43 is the Proton acceptor of the active site. Substrate is bound by residues His74, 150 to 153, 185 to 187, and 207 to 208; these read GFCG, DGG, and AS. An a divalent metal cation-binding site is contributed by Asp185. Asp185 acts as the Proton donor in catalysis.

This sequence belongs to the ribulose-phosphate 3-epimerase family. It depends on a divalent metal cation as a cofactor.

The catalysed reaction is D-ribulose 5-phosphate = D-xylulose 5-phosphate. It functions in the pathway carbohydrate degradation. Functionally, catalyzes the reversible epimerization of D-ribulose 5-phosphate to D-xylulose 5-phosphate. The chain is Ribulose-phosphate 3-epimerase from Chlamydia trachomatis serovar D (strain ATCC VR-885 / DSM 19411 / UW-3/Cx).